Consider the following 257-residue polypeptide: Ubiquinone biosynthesis O-methyltransferase (257 aa).

Positions 43, 77, 98, and 144 each coordinate S-adenosyl-L-methionine.

The protein belongs to the methyltransferase superfamily. UbiG/COQ3 family.

It catalyses the reaction a 3-demethylubiquinol + S-adenosyl-L-methionine = a ubiquinol + S-adenosyl-L-homocysteine + H(+). It carries out the reaction a 3-(all-trans-polyprenyl)benzene-1,2-diol + S-adenosyl-L-methionine = a 2-methoxy-6-(all-trans-polyprenyl)phenol + S-adenosyl-L-homocysteine + H(+). The protein operates within cofactor biosynthesis; ubiquinone biosynthesis. In terms of biological role, O-methyltransferase that catalyzes the 2 O-methylation steps in the ubiquinone biosynthetic pathway. The chain is Ubiquinone biosynthesis O-methyltransferase from Psychrobacter arcticus (strain DSM 17307 / VKM B-2377 / 273-4).